We begin with the raw amino-acid sequence, 526 residues long: Protein ERGIC-53-like (526 aa).

An N-terminal signal peptide occupies residues 1–25 (MPAVSGPGPLFCLLLLLLDPHSPET). At 26–462 (GCPPLRRFEY…QPPRASSCLQ (437 aa)) the chain is on the lumenal side. Residues 31–252 (RRFEYKLSFK…DVLSFLTFSL (222 aa)) form the L-type lectin-like domain. A glycan (N-linked (GlcNAc...) asparagine) is linked at Asn75. Cys176 and Cys215 are oxidised to a cystine. Residues 463–483 (PGIFLFYLLIQTVGFFGYVHF) traverse the membrane as a helical segment. Residues 484-526 (RQELNKSLQECLSTGSLPLGPAPHTPRALGILRRQPLPASMPA) are Cytoplasmic-facing.

Highly expressed in normal and neoplastic prostate. Also expressed in cardiac atrium, salivary gland, spleen and selective cells in the CNS.

The protein localises to the endoplasmic reticulum-Golgi intermediate compartment membrane. In Homo sapiens (Human), this protein is Protein ERGIC-53-like (LMAN1L).